The primary structure comprises 281 residues: Succinate dehydrogenase [ubiquinone] iron-sulfur subunit 1, mitochondrial (281 aa).

The N-terminal 25 residues, methionine 1–leucine 25, are a transit peptide targeting the mitochondrion. The segment at valine 26–threonine 48 is disordered. In terms of domain architecture, 2Fe-2S ferredoxin-type spans lysine 49 to methionine 141. The [2Fe-2S] cluster site is built by cysteine 102, cysteine 107, and cysteine 122. In terms of domain architecture, 4Fe-4S ferredoxin-type spans aspartate 184–tyrosine 214. Residues cysteine 194, cysteine 197, and cysteine 200 each contribute to the [4Fe-4S] cluster site. Cysteine 204 is a binding site for [3Fe-4S] cluster. A ubiquinone is bound at residue tryptophan 209. Residues cysteine 251 and cysteine 257 each coordinate [3Fe-4S] cluster. Residue cysteine 261 participates in [4Fe-4S] cluster binding.

The protein belongs to the succinate dehydrogenase/fumarate reductase iron-sulfur protein family. Component of complex II composed of eight subunits in plants: four classical SDH subunits SDH1, SDH2, SDH3 and SDH4 (a flavoprotein (FP), an iron-sulfur protein (IP), and a cytochrome b composed of a large and a small subunit.), as well as four subunits unknown in mitochondria from bacteria and heterotrophic eukaryotes. Requires [2Fe-2S] cluster as cofactor. [3Fe-4S] cluster is required as a cofactor. [4Fe-4S] cluster serves as cofactor.

It localises to the mitochondrion inner membrane. The catalysed reaction is a quinone + succinate = fumarate + a quinol. It participates in carbohydrate metabolism; tricarboxylic acid cycle; fumarate from succinate (eukaryal route): step 1/1. Functionally, iron-sulfur protein (IP) subunit of succinate dehydrogenase (SDH) that is involved in complex II of the mitochondrial electron transport chain and is responsible for transferring electrons from succinate to ubiquinone (coenzyme Q). This Oryza sativa subsp. japonica (Rice) protein is Succinate dehydrogenase [ubiquinone] iron-sulfur subunit 1, mitochondrial.